Here is a 476-residue protein sequence, read N- to C-terminus: Bifunctional protein HldE (476 aa).

Residues 1-319 (MKITLPEYDK…ANAVYSQQEI (319 aa)) are ribokinase. 196 to 199 (NLAE) serves as a coordination point for ATP. Asp265 is an active-site residue. Residues 345–476 (MTNGCFDILH…EIIKTIRNNS (132 aa)) are cytidylyltransferase.

In the N-terminal section; belongs to the carbohydrate kinase PfkB family. This sequence in the C-terminal section; belongs to the cytidylyltransferase family. As to quaternary structure, homodimer.

The enzyme catalyses D-glycero-beta-D-manno-heptose 7-phosphate + ATP = D-glycero-beta-D-manno-heptose 1,7-bisphosphate + ADP + H(+). It catalyses the reaction D-glycero-beta-D-manno-heptose 1-phosphate + ATP + H(+) = ADP-D-glycero-beta-D-manno-heptose + diphosphate. It participates in nucleotide-sugar biosynthesis; ADP-L-glycero-beta-D-manno-heptose biosynthesis; ADP-L-glycero-beta-D-manno-heptose from D-glycero-beta-D-manno-heptose 7-phosphate: step 1/4. The protein operates within nucleotide-sugar biosynthesis; ADP-L-glycero-beta-D-manno-heptose biosynthesis; ADP-L-glycero-beta-D-manno-heptose from D-glycero-beta-D-manno-heptose 7-phosphate: step 3/4. Catalyzes the phosphorylation of D-glycero-D-manno-heptose 7-phosphate at the C-1 position to selectively form D-glycero-beta-D-manno-heptose-1,7-bisphosphate. Functionally, catalyzes the ADP transfer from ATP to D-glycero-beta-D-manno-heptose 1-phosphate, yielding ADP-D-glycero-beta-D-manno-heptose. The sequence is that of Bifunctional protein HldE from Psychromonas ingrahamii (strain DSM 17664 / CCUG 51855 / 37).